We begin with the raw amino-acid sequence, 741 residues long: Phosphoribosylformylglycinamidine synthase subunit PurL (741 aa).

The active site involves histidine 53. ATP-binding residues include tyrosine 56 and lysine 95. Glutamate 97 is a binding site for Mg(2+). Residues serine 98–histidine 101 and arginine 120 each bind substrate. The active-site Proton acceptor is the histidine 99. Aspartate 121 contributes to the Mg(2+) binding site. Residue glutamine 244 coordinates substrate. Mg(2+) is bound at residue aspartate 274. Glutamate 318 to glutamine 320 contacts substrate. 2 residues coordinate ATP: aspartate 501 and glycine 538. Asparagine 539 is a binding site for Mg(2+). Serine 541 serves as a coordination point for substrate.

Belongs to the FGAMS family. In terms of assembly, monomer. Part of the FGAM synthase complex composed of 1 PurL, 1 PurQ and 2 PurS subunits.

The protein localises to the cytoplasm. The enzyme catalyses N(2)-formyl-N(1)-(5-phospho-beta-D-ribosyl)glycinamide + L-glutamine + ATP + H2O = 2-formamido-N(1)-(5-O-phospho-beta-D-ribosyl)acetamidine + L-glutamate + ADP + phosphate + H(+). It functions in the pathway purine metabolism; IMP biosynthesis via de novo pathway; 5-amino-1-(5-phospho-D-ribosyl)imidazole from N(2)-formyl-N(1)-(5-phospho-D-ribosyl)glycinamide: step 1/2. Part of the phosphoribosylformylglycinamidine synthase complex involved in the purines biosynthetic pathway. Catalyzes the ATP-dependent conversion of formylglycinamide ribonucleotide (FGAR) and glutamine to yield formylglycinamidine ribonucleotide (FGAM) and glutamate. The FGAM synthase complex is composed of three subunits. PurQ produces an ammonia molecule by converting glutamine to glutamate. PurL transfers the ammonia molecule to FGAR to form FGAM in an ATP-dependent manner. PurS interacts with PurQ and PurL and is thought to assist in the transfer of the ammonia molecule from PurQ to PurL. This is Phosphoribosylformylglycinamidine synthase subunit PurL from Limosilactobacillus fermentum (strain NBRC 3956 / LMG 18251) (Lactobacillus fermentum).